The chain runs to 124 residues: Secretion system apparatus protein SsaP (124 aa).

This is Secretion system apparatus protein SsaP (ssaP) from Salmonella typhi.